The following is a 689-amino-acid chain: E3 ubiquitin-protein ligase RNF43 (689 aa).

The first 27 residues, 1–27 (MNRARLQLASLWLLLTVTLQAVASAMG), serve as a signal peptide directing secretion. At 28–191 (TTEREMDVKA…VQEQPKWLHH (164 aa)) the chain is on the extracellular side. 2 N-linked (GlcNAc...) asparagine glycosylation sites follow: asparagine 56 and asparagine 86. Cysteine 85 and cysteine 113 are disulfide-bonded. A helical transmembrane segment spans residues 192 to 212 (DIWILLTVAGTVMFFVLYAVA). Topologically, residues 213-689 (RLLCRQPPPQ…EIEAVCEHAV (477 aa)) are cytoplasmic. Residues 268 to 308 (CAICLEEFTDGQELRILPCCHEYHLGCVDPWLRQNHTCPLC) form an RING-type; atypical zinc finger. Disordered stretches follow at residues 386–430 (QMRT…HGSS), 445–467 (TSSS…ALAS), and 492–639 (VHFH…MSES). Low complexity-rich tracts occupy residues 408–430 (DSSG…HGSS) and 446–461 (SSSS…EDSS). Basic residues-rich tracts occupy residues 492–504 (VHFH…HYRR) and 512–523 (SHPHRSKRRTKV). Residues 574–588 (QQSMPQAASVVQGSS) are compositionally biased toward polar residues.

This sequence belongs to the ZNRF3 family.

The protein resides in the cell membrane. Its subcellular location is the endoplasmic reticulum membrane. It is found in the nucleus envelope. The enzyme catalyses S-ubiquitinyl-[E2 ubiquitin-conjugating enzyme]-L-cysteine + [acceptor protein]-L-lysine = [E2 ubiquitin-conjugating enzyme]-L-cysteine + N(6)-ubiquitinyl-[acceptor protein]-L-lysine.. The protein operates within protein modification; protein ubiquitination. Functionally, E3 ubiquitin-protein ligase that acts as a negative regulator of the Wnt signaling pathway by mediating the ubiquitination, endocytosis and subsequent degradation of Wnt receptor complex components Frizzled. Acts on both canonical and non-canonical Wnt signaling pathway. Along with RSPO2 and ZNRF3, constitutes a master switch that governs limb specification. In Xenopus tropicalis (Western clawed frog), this protein is E3 ubiquitin-protein ligase RNF43 (rnf43).